The chain runs to 190 residues: Small ribosomal subunit protein uS5 (190 aa).

In terms of domain architecture, S5 DRBM spans 22–85; that stretch reads FVDKLVHINR…ESAKRNLTRV (64 aa).

Belongs to the universal ribosomal protein uS5 family. Part of the 30S ribosomal subunit. Contacts proteins S4 and S8.

With S4 and S12 plays an important role in translational accuracy. Its function is as follows. Located at the back of the 30S subunit body where it stabilizes the conformation of the head with respect to the body. The chain is Small ribosomal subunit protein uS5 from Rhodopseudomonas palustris (strain BisA53).